The chain runs to 509 residues: Pituitary homeobox homolog Ptx1 (509 aa).

Low complexity predominate over residues 70–98; it reads NGAGSAGSAESATTTSTALSSGSTGSSTV. 3 disordered regions span residues 70 to 125, 148 to 171, and 204 to 273; these read NGAG…SSVS, QDLVGGYSQHPHHTVVPPHTPKHE, and LNNF…HFTS. Residues 227–242 show a composition bias toward polar residues; that stretch reads RSVNETTIKTENISSS. The span at 243–258 shows a compositional bias: basic and acidic residues; sequence GHDEPMTTSGEEPKND. Positions 259–269 are enriched in basic residues; sequence KKNKRQRRQRT. Positions 262–322 form a DNA-binding region, homeobox; sequence KRQRRQRTHF…KNRRAKWRKR (61 aa). The OAR signature appears at 460–473; the sequence is SSIATLRLKAKQHA. Positions 464–470 match the Nuclear localization signal motif; it reads TLRLKAK.

The protein belongs to the paired homeobox family. Bicoid subfamily.

It localises to the nucleus. Its function is as follows. Appears to control physiological cell functions rather than pattern formation during embryogenesis. In Drosophila melanogaster (Fruit fly), this protein is Pituitary homeobox homolog Ptx1 (Ptx1).